A 127-amino-acid chain; its full sequence is Large ribosomal subunit protein bL20 (127 aa).

This sequence belongs to the bacterial ribosomal protein bL20 family.

Its function is as follows. Binds directly to 23S ribosomal RNA and is necessary for the in vitro assembly process of the 50S ribosomal subunit. It is not involved in the protein synthesizing functions of that subunit. This chain is Large ribosomal subunit protein bL20, found in Renibacterium salmoninarum (strain ATCC 33209 / DSM 20767 / JCM 11484 / NBRC 15589 / NCIMB 2235).